Reading from the N-terminus, the 300-residue chain is tRNA dimethylallyltransferase (300 aa).

An ATP-binding site is contributed by 11–18 (GPTAVGKS). 13 to 18 (TAVGKS) lines the substrate pocket. The tract at residues 35-38 (DSIQ) is interaction with substrate tRNA.

This sequence belongs to the IPP transferase family. As to quaternary structure, monomer. The cofactor is Mg(2+).

The catalysed reaction is adenosine(37) in tRNA + dimethylallyl diphosphate = N(6)-dimethylallyladenosine(37) in tRNA + diphosphate. Its function is as follows. Catalyzes the transfer of a dimethylallyl group onto the adenine at position 37 in tRNAs that read codons beginning with uridine, leading to the formation of N6-(dimethylallyl)adenosine (i(6)A). This Borrelia recurrentis (strain A1) protein is tRNA dimethylallyltransferase.